We begin with the raw amino-acid sequence, 170 residues long: uncharacterized protein (170 aa).

This is an uncharacterized protein from Ureaplasma parvum serovar 3 (strain ATCC 700970).